A 268-amino-acid chain; its full sequence is MERYESLFAQLKERKEGAFVPFVTLGDPGIEQSLKIIDTLIEAGADALELGIPFSDPLADGPTIQNATLRAFAAGVTPAQCFEMLALIRQKHPTIPIGLLMYANLVFNKGIDEFYAQCEKVGVDSVLVADVPVEESAPFRQAALCHNVAPIFICPPNADDDLLRQIASYGRGYTYLLSRAGVTGAENRAALPLNHLVAKLKEYNAAPPLQGFGISAPDQVKAAIDAGAAGAISGSAIVKIIEQHINEPEKMLAALKVFVQPMKAATRS.

Residues E49 and D60 each act as proton acceptor in the active site.

Belongs to the TrpA family. As to quaternary structure, tetramer of two alpha and two beta chains.

It carries out the reaction (1S,2R)-1-C-(indol-3-yl)glycerol 3-phosphate + L-serine = D-glyceraldehyde 3-phosphate + L-tryptophan + H2O. Its pathway is amino-acid biosynthesis; L-tryptophan biosynthesis; L-tryptophan from chorismate: step 5/5. Its function is as follows. The alpha subunit is responsible for the aldol cleavage of indoleglycerol phosphate to indole and glyceraldehyde 3-phosphate. This Shigella flexneri serotype 5b (strain 8401) protein is Tryptophan synthase alpha chain.